The chain runs to 122 residues: Ribonuclease P protein component (122 aa).

Belongs to the RnpA family. As to quaternary structure, consists of a catalytic RNA component (M1 or rnpB) and a protein subunit.

It catalyses the reaction Endonucleolytic cleavage of RNA, removing 5'-extranucleotides from tRNA precursor.. RNaseP catalyzes the removal of the 5'-leader sequence from pre-tRNA to produce the mature 5'-terminus. It can also cleave other RNA substrates such as 4.5S RNA. The protein component plays an auxiliary but essential role in vivo by binding to the 5'-leader sequence and broadening the substrate specificity of the ribozyme. The polypeptide is Ribonuclease P protein component (Roseiflexus sp. (strain RS-1)).